The following is a 248-amino-acid chain: Coenzyme F420:L-glutamate ligase (248 aa).

GTP contacts are provided by residues 15–18 (IPLI), 45–46 (ET), and Lys50. Asp115 contacts a divalent metal cation. Asn118 lines the GTP pocket. Residues Asp155, Ser156, and Gln213 each contribute to the a divalent metal cation site. 211–218 (MGQSNEGI) lines the GTP pocket.

It belongs to the CofE family. Homodimer. Requires Mg(2+) as cofactor. The cofactor is Mn(2+). K(+) serves as cofactor.

It carries out the reaction oxidized coenzyme F420-0 + GTP + L-glutamate = oxidized coenzyme F420-1 + GDP + phosphate + H(+). The catalysed reaction is oxidized coenzyme F420-1 + GTP + L-glutamate = oxidized coenzyme F420-2 + GDP + phosphate + H(+). Its pathway is cofactor biosynthesis; coenzyme F420 biosynthesis. Functionally, catalyzes the GTP-dependent successive addition of two or more gamma-linked L-glutamates to the L-lactyl phosphodiester of 7,8-didemethyl-8-hydroxy-5-deazariboflavin (F420-0) to form coenzyme F420-0-glutamyl-glutamate (F420-2) or polyglutamated F420 derivatives. This is Coenzyme F420:L-glutamate ligase from Methanococcus maripaludis (strain C7 / ATCC BAA-1331).